The following is a 386-amino-acid chain: Prostatic acid phosphatase (386 aa).

The signal sequence occupies residues 1-32 (MRAAPLLLARAASLSLGFLFLLFFWLDRSVLA). Residue Arg-43 coordinates substrate. Residue His-44 is the Nucleophile of the active site. Arg-47 provides a ligand contact to substrate. An N-linked (GlcNAc...) asparagine glycan is attached at Asn-94. A substrate-binding site is contributed by Arg-111. Disulfide bonds link Cys-161–Cys-372, Cys-215–Cys-313, and Cys-347–Cys-351. The N-linked (GlcNAc...) asparagine glycan is linked to Asn-220. Residue His-289 participates in substrate binding. The active-site Proton donor is the Asp-290. N-linked (GlcNAc...) asparagine glycosylation occurs at Asn-333.

Belongs to the histidine acid phosphatase family. In terms of assembly, homodimer; dimer formation is required for phosphatase activity. N-glycosylated. High mannose content, partially sialylated and fucosylated biantennary complex. Also fucosylated with partially sialylated triantennary complex oligosaccharides. In terms of processing, proteolytically cleaved in seminal fluid to produce several peptides. Peptide PAPf39, the most prominent, forms amyloid beta-sheet fibrils, SEVI (semen-derived enhancer of viral infection). In terms of tissue distribution, highly expressed in the prostate, restricted to glandular and ductal epithelial cells. Also expressed in bladder, kidney, pancreas, lung, cervix, testis and ovary. Weak expression in a subset of pancreatic islet cells, squamous epithelia, the pilosebaceous unit, colonic neuroendocrine cells and skin adnexal structures. Low expression in prostate carcinoma cells and tissues. As to expression, widely expressed. Expressed in the sarcolemma of skeletal muscle.

The protein resides in the secreted. It is found in the cell membrane. Its subcellular location is the lysosome membrane. It localises to the nucleus. The protein localises to the cytoplasm. The protein resides in the cytosol. The catalysed reaction is a phosphate monoester + H2O = an alcohol + phosphate. The enzyme catalyses 1-(9Z-octadecenoyl)-sn-glycero-3-phosphate + H2O = 1-(9Z-octadecenoyl)-sn-glycerol + phosphate. It carries out the reaction a ribonucleoside 5'-phosphate + H2O = a ribonucleoside + phosphate. It catalyses the reaction O-phospho-L-tyrosyl-[protein] + H2O = L-tyrosyl-[protein] + phosphate. With respect to regulation, phosphatase activity inhibited by L(+)-tartrate, and by its derivative, alpha-benzylaminobenzylphosphonic acid. In terms of biological role, a non-specific tyrosine phosphatase that dephosphorylates a diverse number of substrates under acidic conditions (pH 4-6) including alkyl, aryl, and acyl orthophosphate monoesters and phosphorylated proteins. Has lipid phosphatase activity and inactivates lysophosphatidic acid in seminal plasma. Its function is as follows. Tyrosine phosphatase that acts as a tumor suppressor of prostate cancer through dephosphorylation of ERBB2 and deactivation of MAPK-mediated signaling. In addition to its tyrosine phosphatase activity has ecto-5'-nucleotidase activity in dorsal root ganglion (DRG) neurons. Generates adenosine from AMP which acts as a pain suppressor. Functionally, (Microbial infection) Forms amyloid beta-sheet fibrils in semen. These fibrils, termed SEVI (semen-derived enhancer of viral infection) capture HIV virions, attach them to target cells and enhance infection. SEVI amyloid fibrils are degraded by polyphenol epigallocatechin-3-gallate (EGCG), a constituent of green tea. Target cell attachment and enhancement of HIV infection is inhibited by surfen. Also similarly boosts XMRV (xenotropic murine leukemia virus-related virus) infection. In Homo sapiens (Human), this protein is Prostatic acid phosphatase.